A 245-amino-acid chain; its full sequence is DNA repair protein RecO (245 aa).

The protein belongs to the RecO family.

Functionally, involved in DNA repair and RecF pathway recombination. The polypeptide is DNA repair protein RecO (Pectobacterium atrosepticum (strain SCRI 1043 / ATCC BAA-672) (Erwinia carotovora subsp. atroseptica)).